Here is a 498-residue protein sequence, read N- to C-terminus: ATP synthase subunit beta, chloroplastic (498 aa).

Residue 172–179 (GGAGVGKT) coordinates ATP.

This sequence belongs to the ATPase alpha/beta chains family. In terms of assembly, F-type ATPases have 2 components, CF(1) - the catalytic core - and CF(0) - the membrane proton channel. CF(1) has five subunits: alpha(3), beta(3), gamma(1), delta(1), epsilon(1). CF(0) has four main subunits: a(1), b(1), b'(1) and c(9-12).

The protein resides in the plastid. It localises to the chloroplast thylakoid membrane. The catalysed reaction is ATP + H2O + 4 H(+)(in) = ADP + phosphate + 5 H(+)(out). Functionally, produces ATP from ADP in the presence of a proton gradient across the membrane. The catalytic sites are hosted primarily by the beta subunits. This Solanum lycopersicum (Tomato) protein is ATP synthase subunit beta, chloroplastic.